The sequence spans 74 residues: Large ribosomal subunit protein bL31 (74 aa).

Cysteine 16, cysteine 18, cysteine 38, and cysteine 41 together coordinate Zn(2+).

The protein belongs to the bacterial ribosomal protein bL31 family. Type A subfamily. In terms of assembly, part of the 50S ribosomal subunit. It depends on Zn(2+) as a cofactor.

In terms of biological role, binds the 23S rRNA. This chain is Large ribosomal subunit protein bL31, found in Mycolicibacterium vanbaalenii (strain DSM 7251 / JCM 13017 / BCRC 16820 / KCTC 9966 / NRRL B-24157 / PYR-1) (Mycobacterium vanbaalenii).